Consider the following 740-residue polypeptide: Anaphase-promoting complex subunit 5 (740 aa).

Ser180 is modified (phosphoserine). 13 TPR repeats span residues 194 to 234, 235 to 285, 286 to 322, 323 to 363, 364 to 403, 404 to 451, 452 to 485, 486 to 525, 526 to 565, 566 to 605, 606 to 645, 646 to 681, and 682 to 721; these read QKQA…FNPD, FAEA…GRSL, RYAA…SNDH, VCLQ…YLAS, LGIQ…SELI, DISI…TESF, AVAL…FPPN, SQHA…ALNG, IEGV…TEMV, ISVL…QYLA, SETV…VLDK, GRAM…NLSE, and AKNY…CAMI. A Phosphothreonine modification is found at Thr217.

Belongs to the APC5 family. The mammalian APC/C is composed at least of 14 distinct subunits ANAPC1, ANAPC2, CDC27/APC3, ANAPC4, ANAPC5, CDC16/APC6, ANAPC7, CDC23/APC8, ANAPC10, ANAPC11, CDC26/APC12, ANAPC13, ANAPC15 and ANAPC16 that assemble into a complex of at least 19 chains with a combined molecular mass of around 1.2 MDa; APC/C interacts with FZR1 and FBXO5.

It is found in the nucleus. The protein localises to the cytoplasm. Its subcellular location is the cytoskeleton. It localises to the spindle. It participates in protein modification; protein ubiquitination. In terms of biological role, component of the anaphase promoting complex/cyclosome (APC/C), a cell cycle-regulated E3 ubiquitin ligase that controls progression through mitosis and the G1 phase of the cell cycle. The APC/C complex acts by mediating ubiquitination and subsequent degradation of target proteins: it mainly mediates the formation of 'Lys-11'-linked polyubiquitin chains and, to a lower extent, the formation of 'Lys-48'- and 'Lys-63'-linked polyubiquitin chains. The APC/C complex catalyzes assembly of branched 'Lys-11'-/'Lys-48'-linked branched ubiquitin chains on target proteins. The chain is Anaphase-promoting complex subunit 5 (Anapc5) from Mus musculus (Mouse).